The primary structure comprises 477 residues: Cysteine--tRNA ligase (477 aa).

Cys34 provides a ligand contact to Zn(2+). Residues 36–46 (PTVYDFAHIGN) carry the 'HIGH' region motif. Positions 235, 260, and 264 each coordinate Zn(2+). Positions 293–297 (KMSKS) match the 'KMSKS' region motif. Lys296 lines the ATP pocket.

Belongs to the class-I aminoacyl-tRNA synthetase family. Monomer. The cofactor is Zn(2+).

The protein localises to the cytoplasm. The catalysed reaction is tRNA(Cys) + L-cysteine + ATP = L-cysteinyl-tRNA(Cys) + AMP + diphosphate. In Mesorhizobium japonicum (strain LMG 29417 / CECT 9101 / MAFF 303099) (Mesorhizobium loti (strain MAFF 303099)), this protein is Cysteine--tRNA ligase.